A 344-amino-acid polypeptide reads, in one-letter code: tRNA dimethylallyltransferase (344 aa).

43-50 (GPTCCGKS) lines the ATP pocket. 45-50 (TCCGKS) serves as a coordination point for substrate. The interaction with substrate tRNA stretch occupies residues 68-71 (DSMQ).

The protein belongs to the IPP transferase family. In terms of assembly, monomer. The cofactor is Mg(2+).

It catalyses the reaction adenosine(37) in tRNA + dimethylallyl diphosphate = N(6)-dimethylallyladenosine(37) in tRNA + diphosphate. Catalyzes the transfer of a dimethylallyl group onto the adenine at position 37 in tRNAs that read codons beginning with uridine, leading to the formation of N6-(dimethylallyl)adenosine (i(6)A). This chain is tRNA dimethylallyltransferase, found in Protochlamydia amoebophila (strain UWE25).